The sequence spans 488 residues: Leucine-rich repeat-containing protein 74A (488 aa).

8 LRR repeats span residues 134 to 155 (AVTK…SLVE), 162 to 182 (YLQE…RIIS), 191 to 212 (SIWS…LLCQ), 219 to 239 (QIKK…EHLG), 247 to 268 (GLTS…ALCN), 275 to 296 (TLTK…ALGE), 303 to 324 (CLVY…KISK), and 331 to 351 (SLRV…ILLI).

The polypeptide is Leucine-rich repeat-containing protein 74A (Homo sapiens (Human)).